Here is a 269-residue protein sequence, read N- to C-terminus: uncharacterized protein (269 aa).

This is an uncharacterized protein from Acanthamoeba polyphaga (Amoeba).